Consider the following 626-residue polypeptide: Chaperone protein DnaK (626 aa).

A Phosphothreonine; by autocatalysis modification is found at Thr175. Over residues 586–606 the composition is skewed to low complexity; it reads GAEGAAAGADGAGASAGSASG. Residues 586–626 form a disordered region; sequence GAEGAAAGADGAGASAGSASGSDDDTVEAEVVDDDDDKDNK. Acidic residues predominate over residues 607–626; that stretch reads SDDDTVEAEVVDDDDDKDNK.

This sequence belongs to the heat shock protein 70 family.

Acts as a chaperone. In Bifidobacterium longum (strain DJO10A), this protein is Chaperone protein DnaK.